The chain runs to 250 residues: tRNA pseudouridine synthase A (250 aa).

The active-site Nucleophile is the aspartate 52. Tyrosine 110 provides a ligand contact to substrate.

It belongs to the tRNA pseudouridine synthase TruA family. As to quaternary structure, homodimer.

The enzyme catalyses uridine(38/39/40) in tRNA = pseudouridine(38/39/40) in tRNA. Its function is as follows. Formation of pseudouridine at positions 38, 39 and 40 in the anticodon stem and loop of transfer RNAs. The protein is tRNA pseudouridine synthase A of Citrifermentans bemidjiense (strain ATCC BAA-1014 / DSM 16622 / JCM 12645 / Bem) (Geobacter bemidjiensis).